The chain runs to 630 residues: Plastin-1 (630 aa).

An N-acetylmethionine modification is found at Met-1. EF-hand domains follow at residues 11 to 46 (EELE…ASLP) and 51 to 86 (KVRE…LKSK). Positions 24, 26, 28, 30, 35, 64, 66, 68, 70, and 75 each coordinate Ca(2+). 2 actin-binding regions span residues 108 to 381 (TSSI…CLHK) and 382 to 626 (PDNN…GKGL). 4 Calponin-homology (CH) domains span residues 122 to 238 (EEEK…KVGL), 266 to 377 (LSPE…NTYP), 396 to 505 (SKEE…RRYT), and 517 to 626 (KVTD…GKGL).

In terms of assembly, monomer. Phosphorylated. In the inner ear, it is expressed in the organ of Corti. Abundant in the utricle (at protein level).

The protein resides in the cytoplasm. It is found in the cell projection. The protein localises to the stereocilium. In terms of biological role, actin-bundling protein. In the inner ear, it is required for stereocilia formation. Mediates liquid packing of actin filaments that is necessary for stereocilia to grow to their proper dimensions. In Mus musculus (Mouse), this protein is Plastin-1 (Pls1).